The primary structure comprises 398 residues: 4-hydroxy-3-methylbut-2-enyl diphosphate reductase (398 aa).

C66 is a binding site for [4Fe-4S] cluster. H96 contributes to the (2E)-4-hydroxy-3-methylbut-2-enyl diphosphate binding site. H96 lines the dimethylallyl diphosphate pocket. H96 contributes to the isopentenyl diphosphate binding site. Residue C157 participates in [4Fe-4S] cluster binding. (2E)-4-hydroxy-3-methylbut-2-enyl diphosphate is bound at residue H185. Position 185 (H185) interacts with dimethylallyl diphosphate. H185 contributes to the isopentenyl diphosphate binding site. E187 serves as the catalytic Proton donor. T250 provides a ligand contact to (2E)-4-hydroxy-3-methylbut-2-enyl diphosphate. C288 serves as a coordination point for [4Fe-4S] cluster. S317, S318, N319, and S380 together coordinate (2E)-4-hydroxy-3-methylbut-2-enyl diphosphate. The dimethylallyl diphosphate site is built by S317, S318, N319, and S380. Positions 317, 318, 319, and 380 each coordinate isopentenyl diphosphate.

This sequence belongs to the IspH family. It depends on [4Fe-4S] cluster as a cofactor.

The enzyme catalyses isopentenyl diphosphate + 2 oxidized [2Fe-2S]-[ferredoxin] + H2O = (2E)-4-hydroxy-3-methylbut-2-enyl diphosphate + 2 reduced [2Fe-2S]-[ferredoxin] + 2 H(+). It catalyses the reaction dimethylallyl diphosphate + 2 oxidized [2Fe-2S]-[ferredoxin] + H2O = (2E)-4-hydroxy-3-methylbut-2-enyl diphosphate + 2 reduced [2Fe-2S]-[ferredoxin] + 2 H(+). It functions in the pathway isoprenoid biosynthesis; dimethylallyl diphosphate biosynthesis; dimethylallyl diphosphate from (2E)-4-hydroxy-3-methylbutenyl diphosphate: step 1/1. It participates in isoprenoid biosynthesis; isopentenyl diphosphate biosynthesis via DXP pathway; isopentenyl diphosphate from 1-deoxy-D-xylulose 5-phosphate: step 6/6. In terms of biological role, catalyzes the conversion of 1-hydroxy-2-methyl-2-(E)-butenyl 4-diphosphate (HMBPP) into a mixture of isopentenyl diphosphate (IPP) and dimethylallyl diphosphate (DMAPP). Acts in the terminal step of the DOXP/MEP pathway for isoprenoid precursor biosynthesis. The protein is 4-hydroxy-3-methylbut-2-enyl diphosphate reductase of Prochlorococcus marinus subsp. pastoris (strain CCMP1986 / NIES-2087 / MED4).